A 236-amino-acid polypeptide reads, in one-letter code: Carbonyl reductase family member 4 (236 aa).

NADP(+)-binding positions include 11-14, 34-35, D55, and 82-84; these read SRGI, RD, and SAG. S134 lines the substrate pocket. Residues Y147, K151, and 180–182 contribute to the NADP(+) site; that span reads IHT. Residue Y147 is the Proton acceptor of the active site.

It belongs to the short-chain dehydrogenases/reductases (SDR) family. In terms of assembly, homotetramer (in vitro). Heterotetramer with HSD17B8; contains two molecules each of HSD17B8 and CBR4.

It is found in the mitochondrion matrix. It functions in the pathway lipid metabolism; fatty acid biosynthesis. Functionally, the heterotetramer with HSD17B8 has NADH-dependent 3-ketoacyl-acyl carrier protein reductase activity, and thereby plays a role in mitochondrial fatty acid biosynthesis. Within the heterotetramer, HSD17B8 binds NADH; CBR4 binds NADPD. The homotetramer has NADPH-dependent quinone reductase activity. Both homotetramer and the heterotetramer have broad in vitro substrate specificity and can reduce 9,10-phenanthrenequinone, 1,4-benzoquinone and various other o-quinones and p-quinones. This is Carbonyl reductase family member 4 (cbr4) from Xenopus tropicalis (Western clawed frog).